Consider the following 145-residue polypeptide: Superoxide dismutase [Mn/Fe] (145 aa).

Residues H10 and H64 each coordinate Fe(3+). Residues H10 and H64 each coordinate Mn(2+).

It belongs to the iron/manganese superoxide dismutase family. Mn(2+) serves as cofactor. Fe(3+) is required as a cofactor.

It catalyses the reaction 2 superoxide + 2 H(+) = H2O2 + O2. Functionally, destroys superoxide anion radicals which are normally produced within the cells and which are toxic to biological systems. Catalyzes the dismutation of superoxide anion radicals into O2 and H2O2 by successive reduction and oxidation of the transition metal ion at the active site. The chain is Superoxide dismutase [Mn/Fe] (sodA) from Streptococcus iniae (Streptococcus shiloi).